Reading from the N-terminus, the 700-residue chain is Constitutive coactivator of peroxisome proliferator-activated receptor gamma (700 aa).

Belongs to the constitutive coactivator of PPAR-gamma family. Interacts with ESR1 and RXRA. Interacts with PPARG; in a ligand-independent manner.

It is found in the nucleus. Functions as a transactivator of PPARG and ESR1. Functions in adipogenesis through PPARG activation. This Bos taurus (Bovine) protein is Constitutive coactivator of peroxisome proliferator-activated receptor gamma (FAM120B).